The following is a 142-amino-acid chain: uncharacterized protein (142 aa).

Positions 1–14 are enriched in basic residues; it reads MKNVSPRRNKHYKS. The tract at residues 1-40 is disordered; it reads MKNVSPRRNKHYKSYKPQVPLKKPVLLPQHPPYRNRRKKK. Low complexity predominate over residues 16 to 28; that stretch reads KPQVPLKKPVLLP.

This is an uncharacterized protein from Aquifex aeolicus (strain VF5).